A 230-amino-acid polypeptide reads, in one-letter code: Large ribosomal subunit protein uL1 (230 aa).

The protein belongs to the universal ribosomal protein uL1 family. Part of the 50S ribosomal subunit.

Its function is as follows. Binds directly to 23S rRNA. The L1 stalk is quite mobile in the ribosome, and is involved in E site tRNA release. In terms of biological role, protein L1 is also a translational repressor protein, it controls the translation of the L11 operon by binding to its mRNA. This is Large ribosomal subunit protein uL1 from Bacillus anthracis (strain A0248).